The chain runs to 270 residues: Putative pyruvate, phosphate dikinase regulatory protein (270 aa).

Residue 147-154 (GVSRSSKT) coordinates ADP.

It belongs to the pyruvate, phosphate/water dikinase regulatory protein family. PDRP subfamily.

The catalysed reaction is N(tele)-phospho-L-histidyl/L-threonyl-[pyruvate, phosphate dikinase] + ADP = N(tele)-phospho-L-histidyl/O-phospho-L-threonyl-[pyruvate, phosphate dikinase] + AMP + H(+). It catalyses the reaction N(tele)-phospho-L-histidyl/O-phospho-L-threonyl-[pyruvate, phosphate dikinase] + phosphate + H(+) = N(tele)-phospho-L-histidyl/L-threonyl-[pyruvate, phosphate dikinase] + diphosphate. Functionally, bifunctional serine/threonine kinase and phosphorylase involved in the regulation of the pyruvate, phosphate dikinase (PPDK) by catalyzing its phosphorylation/dephosphorylation. This Citrifermentans bemidjiense (strain ATCC BAA-1014 / DSM 16622 / JCM 12645 / Bem) (Geobacter bemidjiensis) protein is Putative pyruvate, phosphate dikinase regulatory protein.